A 154-amino-acid polypeptide reads, in one-letter code: Low molecular weight protein-tyrosine-phosphatase PtpA (154 aa).

Cys-8 (nucleophile) is an active-site residue. Residue Arg-14 is part of the active site. Asp-120 acts as the Proton donor in catalysis.

Belongs to the low molecular weight phosphotyrosine protein phosphatase family. As to quaternary structure, interacts with host CORO1A. Post-translationally, phosphorylations at Tyr-122 and Tyr-123 are essential for phosphatase activity.

It localises to the secreted. It carries out the reaction O-phospho-L-tyrosyl-[protein] + H2O = L-tyrosyl-[protein] + phosphate. Functionally, secreted tyrosine phosphatase that plays a critical role during infection as a bacterial effector protein that counteracts host defenses. Required for intramacrophage survival. The sequence is that of Low molecular weight protein-tyrosine-phosphatase PtpA (ptpA) from Staphylococcus aureus (strain bovine RF122 / ET3-1).